Here is a 380-residue protein sequence, read N- to C-terminus: Epoxyqueuosine reductase (380 aa).

Aspartate 139 acts as the Proton donor in catalysis. The 4Fe-4S ferredoxin-type 1 domain maps to 181–213 (IPFEPDDPLLDSCGDCTICVDRCPTSALVGNGQ). Positions 193, 196, 199, 203, 219, 245, 248, and 252 each coordinate [4Fe-4S] cluster. A 4Fe-4S ferredoxin-type 2 domain is found at 234-263 (YRYKIGNRLYGCDTCQQVCPKNRGINTEQD).

Belongs to the QueG family. Monomer. The cofactor is cob(II)alamin. [4Fe-4S] cluster is required as a cofactor.

It localises to the cytoplasm. The catalysed reaction is epoxyqueuosine(34) in tRNA + AH2 = queuosine(34) in tRNA + A + H2O. The protein operates within tRNA modification; tRNA-queuosine biosynthesis. Its function is as follows. Catalyzes the conversion of epoxyqueuosine (oQ) to queuosine (Q), which is a hypermodified base found in the wobble positions of tRNA(Asp), tRNA(Asn), tRNA(His) and tRNA(Tyr). The sequence is that of Epoxyqueuosine reductase from Staphylococcus aureus (strain NCTC 8325 / PS 47).